The following is a 539-amino-acid chain: Effector protein hopAB1 (539 aa).

Disordered regions lie at residues 1-93 (MPGI…PEAQ), 163-220 (QTVR…RHPQ), 230-249 (ASAA…LRRL), and 315-336 (RQTT…SGRR). Residues 18 to 31 (TDGEPVTEREHDSS) are compositionally biased toward basic and acidic residues. Residues 181–194 (SSSGSSQRSLIGRS) show a composition bias toward low complexity.

It belongs to the HopAB family.

It is found in the secreted. Its function is as follows. Effector protein that plays different roles depending on the species and plant cultivars that interact with the pathogen. Acts as a virulence determinant by enhancing the development of disease symptoms and bacterial growth. Acts as an avirulence factor by eliciting hypersensitive response (HR) and plant resistance. This is Effector protein hopAB1 (hopAB1) from Pseudomonas savastanoi pv. phaseolicola (strain 1448A / Race 6) (Pseudomonas syringae pv. phaseolicola (strain 1448A / Race 6)).